Consider the following 604-residue polypeptide: Serine protease 56 (604 aa).

Positions 1–22 (MPLAMLLLLLLLLSPDSQTAHG) are cleaved as a signal peptide. The tract at residues 70–94 (CQGPGRPRPQAPLLQDPPEPVQCGE) is disordered. The span at 75–89 (RPRPQAPLLQDPPEP) shows a compositional bias: pro residues. Residue Asn-101 is glycosylated (N-linked (GlcNAc...) asparagine). A Peptidase S1 domain is found at 109 to 341 (IVGGSTAPSG…FKDWLQEQMS (233 aa)). Cys-134 and Cys-150 are oxidised to a cystine. Catalysis depends on charge relay system residues His-149 and Asp-195. Intrachain disulfides connect Cys-229-Cys-296, Cys-260-Cys-275, and Cys-286-Cys-317. Ser-290 functions as the Charge relay system in the catalytic mechanism. 2 disordered regions span residues 424–452 (RPGLRRGVSAPARSAPSLQELPGHNPREQ) and 578–604 (PQAPWIGADQGQRLGKERQGQLQPPVP).

The protein belongs to the peptidase S1 family. Expressed in the eye: present in the retina and in the optic nerve.

It is found in the endoplasmic reticulum membrane. Its function is as follows. Serine protease required during eye development. The protein is Serine protease 56 (Prss56) of Mus musculus (Mouse).